We begin with the raw amino-acid sequence, 299 residues long: Nucleotide-binding protein glr4163 (299 aa).

18 to 25 (SPAGAGRT) is an ATP binding site.

The protein belongs to the RapZ-like family.

Its function is as follows. Displays ATPase and GTPase activities. The protein is Nucleotide-binding protein glr4163 of Gloeobacter violaceus (strain ATCC 29082 / PCC 7421).